The primary structure comprises 67 residues: Alpha-conotoxin-like Pu1.1 (67 aa).

An N-terminal signal peptide occupies residues 1–21; sequence MGMRMMFTVFLLVVLATTVVS. The propeptide occupies 22 to 46; the sequence is FTSDRTSDGRNAAFNAFDLIALTAR. Position 47 is a pyrrolidone carboxylic acid (Gln-47). 2 disulfide bridges follow: Cys-49–Cys-55 and Cys-50–Cys-63. A lacks the Ser-Xaa-Pro motif that is crucial for potent interaction with nAChR region spans residues 51 to 53; sequence NVP. Cys-63 carries the cysteine amide modification.

Belongs to the conotoxin A superfamily. In terms of tissue distribution, expressed by the venom duct.

The protein localises to the secreted. Alpha-conotoxins act on postsynaptic membranes, they bind to the nicotinic acetylcholine receptors (nAChR) and thus inhibit them. Has possibly a distinct nAChR binding mode from other alpha-conotoxins, due to a different three residue motif (lacks the Ser-Xaa-Pro motif). This chain is Alpha-conotoxin-like Pu1.1, found in Conus pulicarius (Flea-bitten cone).